A 183-amino-acid chain; its full sequence is Endoribonuclease YbeY (183 aa).

3 residues coordinate Zn(2+): His118, His122, and His128. A disordered region spans residues 156–183 (EREQAQRSADSAVLGAVGLEEQDGPGTH).

This sequence belongs to the endoribonuclease YbeY family. Zn(2+) is required as a cofactor.

It localises to the cytoplasm. Single strand-specific metallo-endoribonuclease involved in late-stage 70S ribosome quality control and in maturation of the 3' terminus of the 16S rRNA. This is Endoribonuclease YbeY from Saccharopolyspora erythraea (strain ATCC 11635 / DSM 40517 / JCM 4748 / NBRC 13426 / NCIMB 8594 / NRRL 2338).